A 426-amino-acid polypeptide reads, in one-letter code: 3-phosphoshikimate 1-carboxyvinyltransferase (426 aa).

Residues Lys22, Ser23, and Arg27 each coordinate 3-phosphoshikimate. Lys22 contacts phosphoenolpyruvate. Positions 96 and 124 each coordinate phosphoenolpyruvate. Residues Ser170, Ser171, Gln172, Ser198, Asp314, Asn337, and Lys341 each coordinate 3-phosphoshikimate. Gln172 lines the phosphoenolpyruvate pocket. Asp314 functions as the Proton acceptor in the catalytic mechanism. Residues Arg345, Arg387, and Lys412 each coordinate phosphoenolpyruvate.

Belongs to the EPSP synthase family. As to quaternary structure, monomer.

It is found in the cytoplasm. It catalyses the reaction 3-phosphoshikimate + phosphoenolpyruvate = 5-O-(1-carboxyvinyl)-3-phosphoshikimate + phosphate. Its pathway is metabolic intermediate biosynthesis; chorismate biosynthesis; chorismate from D-erythrose 4-phosphate and phosphoenolpyruvate: step 6/7. Its function is as follows. Catalyzes the transfer of the enolpyruvyl moiety of phosphoenolpyruvate (PEP) to the 5-hydroxyl of shikimate-3-phosphate (S3P) to produce enolpyruvyl shikimate-3-phosphate and inorganic phosphate. This chain is 3-phosphoshikimate 1-carboxyvinyltransferase, found in Shewanella sp. (strain W3-18-1).